The following is a 210-amino-acid chain: Uracil phosphoribosyltransferase (210 aa).

Residues Arg-78, Arg-103, and 130–138 contribute to the 5-phospho-alpha-D-ribose 1-diphosphate site; that span reads DPMLATGGT. Residues Ile-193 and 198–200 each bind uracil; that span reads GDA. 5-phospho-alpha-D-ribose 1-diphosphate is bound at residue Asp-199.

The protein belongs to the UPRTase family. Mg(2+) is required as a cofactor.

The enzyme catalyses UMP + diphosphate = 5-phospho-alpha-D-ribose 1-diphosphate + uracil. Its pathway is pyrimidine metabolism; UMP biosynthesis via salvage pathway; UMP from uracil: step 1/1. Allosterically activated by GTP. Functionally, catalyzes the conversion of uracil and 5-phospho-alpha-D-ribose 1-diphosphate (PRPP) to UMP and diphosphate. In Xanthomonas euvesicatoria pv. vesicatoria (strain 85-10) (Xanthomonas campestris pv. vesicatoria), this protein is Uracil phosphoribosyltransferase.